The following is a 486-amino-acid chain: Membrane-bound lytic murein transglycosylase F (486 aa).

The first 21 residues, 1–21 (MTRIKLNYFVIGVVALLLALA), serve as a signal peptide directing secretion. The tract at residues 22–268 (LWPNIPWRNG…RLEEKYLGHV (247 aa)) is non-LT domain. An LT domain region spans residues 269–486 (GSFDYVDTKT…VVGPGWSINN (218 aa)). Glu-313 is a catalytic residue.

The protein in the N-terminal section; belongs to the bacterial solute-binding protein 3 family. It in the C-terminal section; belongs to the transglycosylase Slt family.

It localises to the cell outer membrane. The enzyme catalyses Exolytic cleavage of the (1-&gt;4)-beta-glycosidic linkage between N-acetylmuramic acid (MurNAc) and N-acetylglucosamine (GlcNAc) residues in peptidoglycan, from either the reducing or the non-reducing ends of the peptidoglycan chains, with concomitant formation of a 1,6-anhydrobond in the MurNAc residue.. Its function is as follows. Murein-degrading enzyme that degrades murein glycan strands and insoluble, high-molecular weight murein sacculi, with the concomitant formation of a 1,6-anhydromuramoyl product. Lytic transglycosylases (LTs) play an integral role in the metabolism of the peptidoglycan (PG) sacculus. Their lytic action creates space within the PG sacculus to allow for its expansion as well as for the insertion of various structures such as secretion systems and flagella. The sequence is that of Membrane-bound lytic murein transglycosylase F from Yersinia enterocolitica serotype O:8 / biotype 1B (strain NCTC 13174 / 8081).